A 201-amino-acid polypeptide reads, in one-letter code: Recombination protein RecR (201 aa).

Residues 58 to 73 form a C4-type zinc finger; that stretch reads CGRCGALTDVDPCGIC. Positions 81-178 constitute a Toprim domain; that stretch reads ETLCLVSEWD…RVTRLAQGIP (98 aa).

The protein belongs to the RecR family.

Functionally, may play a role in DNA repair. It seems to be involved in an RecBC-independent recombinational process of DNA repair. It may act with RecF and RecO. This Nitratidesulfovibrio vulgaris (strain DSM 19637 / Miyazaki F) (Desulfovibrio vulgaris) protein is Recombination protein RecR.